Here is a 61-residue protein sequence, read N- to C-terminus: Protein DDR2 (61 aa).

The N-terminal stretch at 1–22 is a signal peptide; sequence MKVSQVFISAISVFGLATSVNA. N24 and N27 each carry an N-linked (GlcNAc...) asparagine glycan.

To yeast HOR7.

Its function is as follows. May play an important role in the response of cells to diverse environmental stresses. This is Protein DDR2 (DDR2) from Saccharomyces cerevisiae (strain ATCC 204508 / S288c) (Baker's yeast).